A 468-amino-acid chain; its full sequence is Ubiquinone biosynthesis monooxygenase COQ6, mitochondrial (468 aa).

Residues 1 to 28 (MAARLVSRCGAVRAAPHSGPLVSWRRWS) constitute a mitochondrion transit peptide.

The protein belongs to the UbiH/COQ6 family. In terms of assembly, component of a multi-subunit COQ enzyme complex, composed of at least COQ3, COQ4, COQ5, COQ6, COQ7 and COQ9. Interacts with COQ8B and COQ7. It depends on FAD as a cofactor. In terms of tissue distribution, widely expressed.

The protein resides in the mitochondrion inner membrane. It localises to the golgi apparatus. The protein localises to the cell projection. It carries out the reaction 4-hydroxy-3-(all-trans-decaprenyl)benzoate + 2 reduced [2Fe-2S]-[ferredoxin] + O2 + 2 H(+) = 3,4-dihydroxy-5-(all-trans-decaprenyl)benzoate + 2 oxidized [2Fe-2S]-[ferredoxin] + H2O. The enzyme catalyses 2-methoxy-6-(all-trans-decaprenyl)phenol + 2 reduced [2Fe-2S]-[ferredoxin] + O2 + 2 H(+) = 2-methoxy-6-(all-trans-decaprenyl)benzene-1,4-diol + 2 oxidized [2Fe-2S]-[ferredoxin] + H2O. The protein operates within cofactor biosynthesis; ubiquinone biosynthesis. FAD-dependent monooxygenase required for two non-consecutive steps during ubiquinone biosynthesis. Required for the C5-ring hydroxylation during ubiquinone biosynthesis by catalyzing the hydroxylation of 4-hydroxy-3-(all-trans-decaprenyl)benzoic acid to 3,4-dihydroxy-5-(all-trans-decaprenyl)benzoic acid. Also acts downstream of COQ4, for the C1-hydroxylation during ubiquinone biosynthesis by catalyzing the hydroxylation of 2-methoxy-6-(all-trans-decaprenyl)phenol to 2-methoxy-6-(all-trans-decaprenyl)benzene-1,4-diol. The electrons required for the hydroxylation reaction are funneled indirectly to COQ6 from NADPH via a ferredoxin/ferredoxin reductase system composed of FDX2 and FDXR. The sequence is that of Ubiquinone biosynthesis monooxygenase COQ6, mitochondrial from Homo sapiens (Human).